A 491-amino-acid chain; its full sequence is 2,3-bisphosphoglycerate-independent phosphoglycerate mutase (491 aa).

Residues aspartate 11 and serine 61 each coordinate Mn(2+). The active-site Phosphoserine intermediate is the serine 61. Residues histidine 118, 147 to 148, arginine 177, arginine 183, 247 to 250, and lysine 320 contribute to the substrate site; these read RD and RNDR. Residues aspartate 386, histidine 390, aspartate 427, histidine 428, and histidine 445 each coordinate Mn(2+).

The protein belongs to the BPG-independent phosphoglycerate mutase family. Monomer. Requires Mn(2+) as cofactor.

It catalyses the reaction (2R)-2-phosphoglycerate = (2R)-3-phosphoglycerate. Its pathway is carbohydrate degradation; glycolysis; pyruvate from D-glyceraldehyde 3-phosphate: step 3/5. In terms of biological role, catalyzes the interconversion of 2-phosphoglycerate and 3-phosphoglycerate. In Helicobacter pylori (strain ATCC 700392 / 26695) (Campylobacter pylori), this protein is 2,3-bisphosphoglycerate-independent phosphoglycerate mutase.